Consider the following 512-residue polypeptide: DNA-binding protein (512 aa).

The disordered stretch occupies residues 1–105 (MAGRGGSQLE…QDSEDEREAE (105 aa)). Basic and acidic residues predominate over residues 9 to 21 (LERRRERTPDRGR). Residues 69 to 78 (QEQPPPPQQP) are compositionally biased toward pro residues. Residues 79 to 88 (PKKKPRKTKH) are compositionally biased toward basic residues. Positions 96-105 (QDSEDEREAE) are enriched in acidic residues. Position 174 is a phosphotyrosine; by host (Tyr174). Residues Cys263 and His265 each coordinate Zn(2+). The tract at residues 276–310 (IEMDVASENGQRALKENPDRAKVTQNRWGRSVVQL) is flexible loop. Zn(2+) contacts are provided by Cys318, Cys334, Cys376, Cys378, Cys430, and Cys447. Positions 495 to 512 (VSLPAGHAETSRQNPFDF) are C-terminal arm, DBP binding.

It belongs to the adenoviridae E2A DNA-binding protein family. Homomultimerizes on viral ssDNA bound to pTP. Forms a initiation complex with viral polymerase, pTP and hosts NFIA and POU2F1/OCT1. Interacts with host SRCAP.

The protein resides in the host nucleus. Its function is as follows. Plays a role in the elongation phase of viral strand displacement replication by unwinding the template in an ATP-independent fashion, employing its capacity to form multimers. Also enhances the rate of initiation. Released from template upon second strand synthesis. Assembles in complex with viral pTP, viral pol, host NFIA and host POU2F1/OCT1 on viral origin of replication. Covers the whole ssDNA genome during synthesis. The complementary strand synthesis induces its relese from DNA template. May inhibit cellular transcription mediated by the interaction between host SRCAP and CBP. The sequence is that of DNA-binding protein from Homo sapiens (Human).